A 498-amino-acid polypeptide reads, in one-letter code: MKTIHFDMNKYETHVDLEYLKEHGRVEKISDGVIFCSGLENAALHQAVLIDERHRGVILELNEEFVGIGLIDKTNDILEGMHVGVSGKFIEVDLFEEMAGRIIDTTGKMLYEESEEKPTATSPLFCVTPAIMTIDSVTRPLNTGLAVIDSITPIGRGQRQLILGNRQSGKTQIAVDTIINQHDQNVHCIYVAIGLKAAYIAEVIETLRNHGAMEYSTVVATAASDSLTAQYLTPYAGMALAEALRDQGKDVLIILDDLTKHADAYRAITLLFNRPPGREAYPGDSFYIHSSLLERAVQMNEEHGGGSITAIPMIETLSDDVTAYIPTNVISITDGQLFLKSDLFNRGQKPAVDVGVSVSRIGGDAQHPIIRKLSKNLTLILSQFEELKELLDFGNALDDGSMKMVSDGRLLTELFKQKILSPLSVTELIVILYAFQNGFLTKIPPANIQTFKGLLLEKAHMHKDFESFSAQIEAINELNESHVEMLEEIIRETGRLFS.

The protein belongs to the ATPase alpha/beta chains family. In terms of assembly, F-type ATPases have 2 components, CF(1) - the catalytic core - and CF(0) - the membrane proton channel. CF(1) has five subunits: alpha(3), beta(3), gamma(1), delta(1), epsilon(1). CF(0) has three main subunits: a(1), b(2) and c(9-12). The alpha and beta chains form an alternating ring which encloses part of the gamma chain. CF(1) is attached to CF(0) by a central stalk formed by the gamma and epsilon chains, while a peripheral stalk is formed by the delta and b chains.

The protein localises to the cell membrane. It carries out the reaction ATP + H2O + 4 H(+)(in) = ADP + phosphate + 5 H(+)(out). In terms of biological role, produces ATP from ADP in the presence of a proton gradient across the membrane. The alpha chain is a regulatory subunit. The chain is ATP synthase subunit alpha 1 from Listeria monocytogenes serovar 1/2a (strain ATCC BAA-679 / EGD-e).